The following is a 345-amino-acid chain: Phosphoribosylformylglycinamidine cyclo-ligase (345 aa).

Belongs to the AIR synthase family.

The protein resides in the cytoplasm. The catalysed reaction is 2-formamido-N(1)-(5-O-phospho-beta-D-ribosyl)acetamidine + ATP = 5-amino-1-(5-phospho-beta-D-ribosyl)imidazole + ADP + phosphate + H(+). Its pathway is purine metabolism; IMP biosynthesis via de novo pathway; 5-amino-1-(5-phospho-D-ribosyl)imidazole from N(2)-formyl-N(1)-(5-phospho-D-ribosyl)glycinamide: step 2/2. This is Phosphoribosylformylglycinamidine cyclo-ligase from Shewanella baltica (strain OS185).